A 152-amino-acid polypeptide reads, in one-letter code: Deoxyuridine 5'-triphosphate nucleotidohydrolase (152 aa).

Substrate is bound by residues 71 to 73 (RSG), N84, 88 to 90 (LVD), and M98.

The protein belongs to the dUTPase family. The cofactor is Mg(2+).

It carries out the reaction dUTP + H2O = dUMP + diphosphate + H(+). It participates in pyrimidine metabolism; dUMP biosynthesis; dUMP from dCTP (dUTP route): step 2/2. In terms of biological role, this enzyme is involved in nucleotide metabolism: it produces dUMP, the immediate precursor of thymidine nucleotides and it decreases the intracellular concentration of dUTP so that uracil cannot be incorporated into DNA. The chain is Deoxyuridine 5'-triphosphate nucleotidohydrolase from Shewanella oneidensis (strain ATCC 700550 / JCM 31522 / CIP 106686 / LMG 19005 / NCIMB 14063 / MR-1).